A 545-amino-acid polypeptide reads, in one-letter code: Thermosome subunit beta (545 aa).

The protein belongs to the TCP-1 chaperonin family. Forms a Heterooligomeric complex of two stacked eight-membered rings.

In terms of biological role, molecular chaperone; binds unfolded polypeptides in vitro, and has a weak ATPase activity. This chain is Thermosome subunit beta (thsB), found in Thermococcus sp. (strain KS-8).